The chain runs to 294 residues: Cytidine deaminase (294 aa).

CMP/dCMP-type deaminase domains are found at residues 48–168 and 187–294; these read DDDA…FGPK and ALTD…RITF. A substrate-binding site is contributed by 89–91; it reads NME. A Zn(2+)-binding site is contributed by histidine 102. The active-site Proton donor is the glutamate 104. Positions 129 and 132 each coordinate Zn(2+).

Belongs to the cytidine and deoxycytidylate deaminase family. Homodimer. It depends on Zn(2+) as a cofactor.

The catalysed reaction is cytidine + H2O + H(+) = uridine + NH4(+). The enzyme catalyses 2'-deoxycytidine + H2O + H(+) = 2'-deoxyuridine + NH4(+). In terms of biological role, this enzyme scavenges exogenous and endogenous cytidine and 2'-deoxycytidine for UMP synthesis. The chain is Cytidine deaminase from Serratia proteamaculans (strain 568).